The chain runs to 127 residues: Small ribosomal subunit protein eS8 (127 aa).

The tract at residues Met1–Glu31 is disordered.

Belongs to the eukaryotic ribosomal protein eS8 family. As to quaternary structure, part of the 30S ribosomal subunit.

In Thermoplasma acidophilum (strain ATCC 25905 / DSM 1728 / JCM 9062 / NBRC 15155 / AMRC-C165), this protein is Small ribosomal subunit protein eS8 (rps8e).